The following is an 83-amino-acid chain: MRALYPESFKSKVAMYSGAWCGCRPRTRQLSGRLGRGTCGGRQPASRSADFSCECVLLLPLQDPSLLPQKLGLFAGTLVRLSP.

Functionally, cationic antimicrobial peptide that exhibits a potent and broad-spectrum antimicrobial activity against both bacteria and fungi, as well as against the multidrug-resistant bacteria P.aeruginosa. Exhibits rapid bactericidal kinetic. Acts by destroying the integrity of bacterial membranes, leading to bacterial death. Also exhibits potent anti-biofilm activity against P.aeruginosa. Shows high thermal stability and ion tolerance, as it maintains antibacterial activity even when heated to 100 degrees Celsius for 30 minutes and in presence of high levels of NaCl, CaCl(2) and MgCl(2). Does not show cytotoxicity and hemolytic activity. In a mouse model of burn infection, exhibits a remarkably reduction in the bacterial load caused by multidrug-resistant P.aeruginosa at the site of infection, and promotes wound healing. The chain is Scyreptin from Scylla paramamosain (Mud crab).